The sequence spans 72 residues: Translation initiation factor IF-1 (72 aa).

The S1-like domain occupies 1–72 (MAKEELLEFP…TKGRITYRFK (72 aa)).

Belongs to the IF-1 family. As to quaternary structure, component of the 30S ribosomal translation pre-initiation complex which assembles on the 30S ribosome in the order IF-2 and IF-3, IF-1 and N-formylmethionyl-tRNA(fMet); mRNA recruitment can occur at any time during PIC assembly.

It is found in the cytoplasm. In terms of biological role, one of the essential components for the initiation of protein synthesis. Stabilizes the binding of IF-2 and IF-3 on the 30S subunit to which N-formylmethionyl-tRNA(fMet) subsequently binds. Helps modulate mRNA selection, yielding the 30S pre-initiation complex (PIC). Upon addition of the 50S ribosomal subunit IF-1, IF-2 and IF-3 are released leaving the mature 70S translation initiation complex. In Caulobacter vibrioides (strain ATCC 19089 / CIP 103742 / CB 15) (Caulobacter crescentus), this protein is Translation initiation factor IF-1.